A 784-amino-acid chain; its full sequence is Toll-like receptor 2 (784 aa).

A signal peptide spans 1 to 20 (MPHTLWMVWVLGVIISLSKE). The Extracellular portion of the chain corresponds to 21–587 (ESSNQASLSC…VRLSVSECHR (567 aa)). Cys30 and Cys36 are joined by a disulfide. 19 LRR repeats span residues 54–77 (VKSL…RCVN), 78–101 (LQAL…SLGS), 102–125 (LEHL…PLSS), 126–150 (LTFL…HLTK), 151–175 (LQIL…GLTF), 176–199 (LEEL…SIQN), 200–223 (VSHL…VTSS), 224–250 (VECL…TNSL), 251–278 (IKKF…QISG), 279–308 (LLEL…DPGK), 309–337 (VETL…LTER), 338–361 (VKRI…HLKS), 362–388 (LEYL…AWPS), 389–414 (LQTL…TLKN), 415–437 (LTNV…WPEK), 438–457 (MKYL…CIPK), 458–478 (TLEI…NLPQ), 479–500 (LKEL…LLPM), and 501–524 (LLVL…SFHT). Asn114 carries N-linked (GlcNAc...) asparagine glycosylation. Asn199 is a glycosylation site (N-linked (GlcNAc...) asparagine). Residues Cys353 and Cys382 are joined by a disulfide bond. N-linked (GlcNAc...) asparagine glycosylation is present at Asn414. Cys432 and Cys454 are joined by a disulfide. Residue Asn442 is glycosylated (N-linked (GlcNAc...) asparagine). The region spanning 525–579 (LKTLEAGGNNFICSCEFLSFTQEQQALAKVLIDWPANYLCDSPSHVRGQQVQDVR) is the LRRCT domain. Residues 588 to 608 (TALVSGMCCALFLLILLTGVL) traverse the membrane as a helical segment. Topologically, residues 609–784 (CHRFHGLWYM…WVNLRAAIKS (176 aa)) are cytoplasmic. The TIR domain maps to 639 to 782 (ICYDAFVSYS…GFWVNLRAAI (144 aa)). Lys754 participates in a covalent cross-link: Glycyl lysine isopeptide (Lys-Gly) (interchain with G-Cter in ubiquitin). Residues 761 to 778 (YLEWPMDEAQREGFWVNL) carry the ATG16L1-binding motif motif.

The protein belongs to the Toll-like receptor family. Interacts with LY96, TLR1 and TLR6 (via extracellular domain). TLR2 seems to exist in heterodimers with either TLR1 or TLR6 before stimulation by the ligand. The heterodimers form bigger oligomers in response to their corresponding ligands as well as further heterotypic associations with other receptors such as CD14 and/or CD36. Binds MYD88 (via TIR domain). Interacts with TICAM1. Interacts with CNPY3. Interacts with ATG16L1. Interacts with PPP1R11. Interacts with TICAM2. Interacts with TIRAP. Ubiquitinated at Lys-754 by PPP1R11, leading to its degradation. Deubiquitinated by USP2. In terms of processing, glycosylation of Asn-442 is critical for secretion of the N-terminal ectodomain of TLR2.

Its subcellular location is the membrane. It localises to the cytoplasmic vesicle. It is found in the phagosome membrane. The protein localises to the membrane raft. Its function is as follows. Cooperates with LY96 to mediate the innate immune response to bacterial lipoproteins and other microbial cell wall components. Cooperates with TLR1 or TLR6 to mediate the innate immune response to bacterial lipoproteins or lipopeptides. Acts via MYD88 and TRAF6, leading to NF-kappa-B activation, cytokine secretion and the inflammatory response. May also promote apoptosis in response to lipoproteins. Forms activation clusters composed of several receptors depending on the ligand, these clusters trigger signaling from the cell surface and subsequently are targeted to the Golgi in a lipid-raft dependent pathway. Forms the cluster TLR2:TLR6:CD14:CD36 in response to diacylated lipopeptides and TLR2:TLR1:CD14 in response to triacylated lipopeptides. This chain is Toll-like receptor 2 (TLR2), found in Pan troglodytes (Chimpanzee).